Reading from the N-terminus, the 156-residue chain is Eosinophil cationic-type ribonuclease 3 (156 aa).

Positions 1-25 (MGPKLLESRLCLLLLLRLVLMLASC) are cleaved as a signal peptide. The Proton acceptor role is filled by His38. N-linked (GlcNAc...) asparagine glycosylation occurs at Asn41. 4 cysteine pairs are disulfide-bonded: Cys47-Cys106, Cys61-Cys119, Cys79-Cys134, and Cys86-Cys94. A substrate-binding site is contributed by 62–66 (KGLNT). N-linked (GlcNAc...) asparagine glycans are attached at residues Asn89, Asn96, and Asn107. Residue His151 is the Proton donor of the active site.

This sequence belongs to the pancreatic ribonuclease family.

This Mus musculus (Mouse) protein is Eosinophil cationic-type ribonuclease 3 (Ear3).